Consider the following 601-residue polypeptide: HIRA-interacting protein 3 (601 aa).

Disordered regions lie at residues 60–469 (KMQA…EDHP) and 546–601 (STGR…GDSS). Residues 66–76 (GTREGKPDFIK) show a composition bias toward basic and acidic residues. Phosphoserine is present on residues Ser85, Ser96, and Ser98. The span at 97-113 (ESESSSSPSSPDGSGPS) shows a compositional bias: low complexity. Residues 117–129 (RTTKKTCLRRALK) are compositionally biased toward basic residues. The segment covering 130 to 149 (KAVESTDEDHQTDLDAKMGL) has biased composition (basic and acidic residues). The residue at position 134 (Ser134) is a Phosphoserine. 2 positions are modified to phosphothreonine: Thr135 and Thr141. Phosphoserine is present on residues Ser152, Ser153, and Ser163. The residue at position 167 (Thr167) is a Phosphothreonine. The segment covering 186 to 205 (GAKDKQVPLKADRKQVREES) has biased composition (basic and acidic residues). 11 positions are modified to phosphoserine: Ser205, Ser207, Ser208, Ser231, Ser234, Ser238, Ser313, Ser359, Ser360, Ser384, and Ser389. Basic and acidic residues-rich tracts occupy residues 238-264 (SPAK…ERKS) and 313-324 (SSEKGEAEKEEG). The span at 347-378 (RTQTESGRRQNTSSRDDSNSTQEQAAAQGTTK) shows a compositional bias: polar residues. A compositionally biased stretch (low complexity) spans 379–388 (SGSLGSSNGD). Thr391 carries the post-translational modification Phosphothreonine. Phosphoserine is present on residues Ser396 and Ser398. Positions 413–432 (SNKSSKNGQARSCSSSSDSS) are enriched in low complexity. An interaction with the histone H2A-H2B complex region spans residues 429 to 572 (SDSSPEPTGQ…TSPGETYRRT (144 aa)). The span at 556–566 (WNPSGEGTSPG) shows a compositional bias: polar residues. Ser564, Ser575, Ser595, Ser596, and Ser600 each carry phosphoserine. The segment covering 568–580 (TYRRTLDSEEEQP) has biased composition (basic and acidic residues).

Interacts (via C-terminus) with histone H2A-H2B dimers; the interaction is direct. Interacts with HIRA. Interacts with CK2. Post-translationally, phosphorylated by CK2.

The protein resides in the nucleus. In terms of biological role, histone chaperone that carries a H2A-H2B histone complex and facilitates its deposition onto chromatin. The sequence is that of HIRA-interacting protein 3 from Mus musculus (Mouse).